Consider the following 160-residue polypeptide: Glutathione peroxidase homolog BsaA (160 aa).

Residue Cys35 is part of the active site.

It belongs to the glutathione peroxidase family.

The chain is Glutathione peroxidase homolog BsaA (bsaA) from Bacillus subtilis (strain 168).